The primary structure comprises 864 residues: Mitochondrial 15S rRNA processing factor CCM1 (864 aa).

A mitochondrion-targeting transit peptide spans 1 to 76 (MYMARCGPKN…REFSNTLKER (76 aa)). PPR repeat units lie at residues 319 to 353 (NKQN…STKH) and 356 to 390 (DICT…NIKP).

The protein belongs to the CCM1 family. In terms of assembly, binds to mitochondrial small subunit 15S rRNA.

The protein localises to the mitochondrion. Functionally, regulates mitochondrial small subunit maturation by controlling 15S rRNA 5'-end processing. Localizes to the 5' precursor of the 15S rRNA in a position that is subsequently occupied by mS47 in the mature yeast mtSSU. Uses structure and sequence-specific RNA recognition, binding to a single-stranded region of the precursor and specifically recognizing bases -6 to -1. The exchange of Ccm1 for mS47 is coupled to the irreversible removal of precursor rRNA that is accompanied by conformational changes of the mitoribosomal proteins uS5m and mS26. These conformational changes signal completion of 5'-end rRNA processing through protection of the mature 5'-end of the 15S rRNA and stabilization of mS47. The removal of the 5' precursor together with the dissociation of Ccm1 may be catalyzed by the 5'-3' exoribonuclease Pet127. Involved in the specific removal of group I introns in mitochondrial encoded transcripts. This Saccharomyces cerevisiae (strain Lalvin EC1118 / Prise de mousse) (Baker's yeast) protein is Mitochondrial 15S rRNA processing factor CCM1 (CCM1).